The primary structure comprises 235 residues: Small ribosomal subunit protein uS3 (235 aa).

The KH type-2 domain occupies 39–107; that stretch reads VRLFLRKELF…PTQINIAEIR (69 aa).

This sequence belongs to the universal ribosomal protein uS3 family. As to quaternary structure, part of the 30S ribosomal subunit. Forms a tight complex with proteins S10 and S14.

Its function is as follows. Binds the lower part of the 30S subunit head. Binds mRNA in the 70S ribosome, positioning it for translation. The sequence is that of Small ribosomal subunit protein uS3 from Buchnera aphidicola subsp. Baizongia pistaciae (strain Bp).